A 571-amino-acid polypeptide reads, in one-letter code: Urease subunit alpha (571 aa).

The 439-residue stretch at 133–571 folds into the Urease domain; the sequence is GGIDTHVHFI…LPLTQRYFLF (439 aa). Residues H138, H140, and K221 each contribute to the Ni(2+) site. K221 is modified (N6-carboxylysine). A substrate-binding site is contributed by H223. Ni(2+) contacts are provided by H250 and H276. The Proton donor role is filled by H324. D364 serves as a coordination point for Ni(2+).

Belongs to the metallo-dependent hydrolases superfamily. Urease alpha subunit family. As to quaternary structure, heterotrimer of UreA (gamma), UreB (beta) and UreC (alpha) subunits. Three heterotrimers associate to form the active enzyme. The cofactor is Ni cation. Post-translationally, carboxylation allows a single lysine to coordinate two nickel ions.

It is found in the cytoplasm. It catalyses the reaction urea + 2 H2O + H(+) = hydrogencarbonate + 2 NH4(+). It participates in nitrogen metabolism; urea degradation; CO(2) and NH(3) from urea (urease route): step 1/1. This Staphylococcus aureus (strain MRSA252) protein is Urease subunit alpha.